Here is a 156-residue protein sequence, read N- to C-terminus: Ribosomal RNA large subunit methyltransferase H (156 aa).

S-adenosyl-L-methionine-binding positions include leucine 73, glycine 104, and 123 to 128; that span reads VSSLTL.

Belongs to the RNA methyltransferase RlmH family. As to quaternary structure, homodimer.

The protein resides in the cytoplasm. The catalysed reaction is pseudouridine(1915) in 23S rRNA + S-adenosyl-L-methionine = N(3)-methylpseudouridine(1915) in 23S rRNA + S-adenosyl-L-homocysteine + H(+). In terms of biological role, specifically methylates the pseudouridine at position 1915 (m3Psi1915) in 23S rRNA. The chain is Ribosomal RNA large subunit methyltransferase H from Burkholderia mallei (strain NCTC 10247).